We begin with the raw amino-acid sequence, 509 residues long: Steroid 17-alpha-hydroxylase/17,20 lyase (509 aa).

Cys-445 is a heme binding site.

Belongs to the cytochrome P450 family. Requires heme as cofactor.

It localises to the membrane. The catalysed reaction is a C21-steroid + reduced [NADPH--hemoprotein reductase] + O2 = a 17alpha-hydroxy-C21-steroid + oxidized [NADPH--hemoprotein reductase] + H2O + H(+). It carries out the reaction 17alpha-hydroxyprogesterone + reduced [NADPH--hemoprotein reductase] + O2 = androst-4-ene-3,17-dione + acetate + oxidized [NADPH--hemoprotein reductase] + H2O + 2 H(+). The enzyme catalyses 17alpha-hydroxypregnenolone + reduced [NADPH--hemoprotein reductase] + O2 = 3beta-hydroxyandrost-5-en-17-one + acetate + oxidized [NADPH--hemoprotein reductase] + H2O + 2 H(+). It functions in the pathway lipid metabolism; steroid biosynthesis. In terms of biological role, conversion of pregnenolone and progesterone to their 17-alpha-hydroxylated products and subsequently to dehydroepiandrosterone (DHEA) and androstenedione. Catalyzes both the 17-alpha-hydroxylation and the 17,20-lyase reaction. The chain is Steroid 17-alpha-hydroxylase/17,20 lyase (CYP17A1) from Squalus acanthias (Spiny dogfish).